A 152-amino-acid polypeptide reads, in one-letter code: Transcriptional regulator MraZ (152 aa).

SpoVT-AbrB domains are found at residues 5–52 (ASAI…PLHE) and 81–124 (AHEV…DEQA).

This sequence belongs to the MraZ family. Forms oligomers.

The protein localises to the cytoplasm. It localises to the nucleoid. The chain is Transcriptional regulator MraZ from Shewanella sp. (strain MR-7).